We begin with the raw amino-acid sequence, 380 residues long: 4-hydroxy-3-methylbut-2-en-1-yl diphosphate synthase (flavodoxin) (380 aa).

Residues Cys-275, Cys-278, Cys-310, and Glu-317 each contribute to the [4Fe-4S] cluster site.

Belongs to the IspG family. [4Fe-4S] cluster is required as a cofactor.

It catalyses the reaction (2E)-4-hydroxy-3-methylbut-2-enyl diphosphate + oxidized [flavodoxin] + H2O + 2 H(+) = 2-C-methyl-D-erythritol 2,4-cyclic diphosphate + reduced [flavodoxin]. Its pathway is isoprenoid biosynthesis; isopentenyl diphosphate biosynthesis via DXP pathway; isopentenyl diphosphate from 1-deoxy-D-xylulose 5-phosphate: step 5/6. In terms of biological role, converts 2C-methyl-D-erythritol 2,4-cyclodiphosphate (ME-2,4cPP) into 1-hydroxy-2-methyl-2-(E)-butenyl 4-diphosphate. The chain is 4-hydroxy-3-methylbut-2-en-1-yl diphosphate synthase (flavodoxin) from Hyphomonas neptunium (strain ATCC 15444).